The primary structure comprises 89 residues: Small ribosomal subunit protein uS14A (89 aa).

The protein belongs to the universal ribosomal protein uS14 family. Part of the 30S ribosomal subunit. Contacts proteins S3 and S10.

Binds 16S rRNA, required for the assembly of 30S particles and may also be responsible for determining the conformation of the 16S rRNA at the A site. This is Small ribosomal subunit protein uS14A from Listeria innocua serovar 6a (strain ATCC BAA-680 / CLIP 11262).